The chain runs to 165 residues: Protein OPG091 (165 aa).

It belongs to the orthopoxvirus OPG091 family.

Its subcellular location is the virion. The protein resides in the host cytoplasm. Functionally, contributes to vaccinia virus virulence in mice but not to replication in cell culture. This is Protein OPG091 (OPG091) from Homo sapiens (Human).